The chain runs to 100 residues: Urease subunit gamma (100 aa).

It belongs to the urease gamma subunit family. In terms of assembly, heterotrimer of UreA (gamma), UreB (beta) and UreC (alpha) subunits. Three heterotrimers associate to form the active enzyme.

It localises to the cytoplasm. It carries out the reaction urea + 2 H2O + H(+) = hydrogencarbonate + 2 NH4(+). It participates in nitrogen metabolism; urea degradation; CO(2) and NH(3) from urea (urease route): step 1/1. The polypeptide is Urease subunit gamma (Haemophilus influenzae (strain ATCC 51907 / DSM 11121 / KW20 / Rd)).